We begin with the raw amino-acid sequence, 689 residues long: Armadillo-like helical domain-containing protein 3 (689 aa).

Residues 520 to 538 (IFTLTLMVVNLFNMFITYG) traverse the membrane as a helical segment.

This sequence belongs to the ARMH3 family.

It is found in the golgi apparatus membrane. Its subcellular location is the cytoplasm. May be involved in Golgi maintenance and protein secretion. The polypeptide is Armadillo-like helical domain-containing protein 3 (Xenopus laevis (African clawed frog)).